Here is a 250-residue protein sequence, read N- to C-terminus: tRNA (guanine-N(1)-)-methyltransferase (250 aa).

S-adenosyl-L-methionine contacts are provided by residues glycine 113 and 133–138 (IGDYVL).

Belongs to the RNA methyltransferase TrmD family. Homodimer.

It is found in the cytoplasm. It carries out the reaction guanosine(37) in tRNA + S-adenosyl-L-methionine = N(1)-methylguanosine(37) in tRNA + S-adenosyl-L-homocysteine + H(+). Specifically methylates guanosine-37 in various tRNAs. The polypeptide is tRNA (guanine-N(1)-)-methyltransferase (Photorhabdus laumondii subsp. laumondii (strain DSM 15139 / CIP 105565 / TT01) (Photorhabdus luminescens subsp. laumondii)).